Here is a 409-residue protein sequence, read N- to C-terminus: Ribose-phosphate pyrophosphokinase 3, chloroplastic (409 aa).

2 stretches are compositionally biased toward low complexity: residues 1–16 and 34–43; these read MATA…PAAA and PASAFARPSP. The disordered stretch occupies residues 1-43; that stretch reads MATAASASASASPAAAFGAKTRRPGPSPSPSPSPASAFARPSP. Residues 1–44 constitute a chloroplast transit peptide; that stretch reads MATAASASASASPAAAFGAKTRRPGPSPSPSPSPASAFARPSPR. D229 and H231 together coordinate Mg(2+). The segment at 312-327 is binding of phosphoribosylpyrophosphate; sequence GRHVVIVDDLVQSGGT.

Belongs to the ribose-phosphate pyrophosphokinase family. Mg(2+) serves as cofactor.

The protein localises to the plastid. It localises to the chloroplast. The enzyme catalyses D-ribose 5-phosphate + ATP = 5-phospho-alpha-D-ribose 1-diphosphate + AMP + H(+). The sequence is that of Ribose-phosphate pyrophosphokinase 3, chloroplastic from Oryza sativa subsp. japonica (Rice).